Consider the following 418-residue polypeptide: Serine hydroxymethyltransferase (418 aa).

Residues leucine 121 and 125 to 127 (GHL) contribute to the (6S)-5,6,7,8-tetrahydrofolate site. Lysine 230 is subject to N6-(pyridoxal phosphate)lysine. Residue 356 to 358 (SPF) participates in (6S)-5,6,7,8-tetrahydrofolate binding.

The protein belongs to the SHMT family. Homodimer. Requires pyridoxal 5'-phosphate as cofactor.

The protein localises to the cytoplasm. The enzyme catalyses (6R)-5,10-methylene-5,6,7,8-tetrahydrofolate + glycine + H2O = (6S)-5,6,7,8-tetrahydrofolate + L-serine. It participates in one-carbon metabolism; tetrahydrofolate interconversion. It functions in the pathway amino-acid biosynthesis; glycine biosynthesis; glycine from L-serine: step 1/1. In terms of biological role, catalyzes the reversible interconversion of serine and glycine with tetrahydrofolate (THF) serving as the one-carbon carrier. This reaction serves as the major source of one-carbon groups required for the biosynthesis of purines, thymidylate, methionine, and other important biomolecules. Also exhibits THF-independent aldolase activity toward beta-hydroxyamino acids, producing glycine and aldehydes, via a retro-aldol mechanism. This chain is Serine hydroxymethyltransferase, found in Shewanella pealeana (strain ATCC 700345 / ANG-SQ1).